The primary structure comprises 599 residues: uncharacterized protein (599 aa).

This is an uncharacterized protein from Acanthamoeba polyphaga (Amoeba).